We begin with the raw amino-acid sequence, 563 residues long: Pentatricopeptide repeat-containing protein At4g39620, chloroplastic (563 aa).

The transit peptide at 1 to 47 (MDYLLTSPSSLRFSDFISSIPKETDHKWLRFSVNLGDARRSTRTRIT) directs the protein to the chloroplast. PPR repeat units follow at residues 132–166 (DNGV…GCRP), 167–197 (DASV…YLDK), 207–241 (NVVT…PVSP), 242–276 (DVYT…ECKP), 277–311 (DIIT…KEKP), 312–346 (TLPT…NYIP), 347–381 (SFIT…DRVL), 382–416 (KAST…RVHP), and 417–451 (DAST…GIVP). 2 disordered regions span residues 468–501 (PGSG…FQDK) and 520–551 (NLSG…NNMM). Basic and acidic residues predominate over residues 520-537 (NLSGHDKGSRDESRKPSQ).

This sequence belongs to the PPR family. P subfamily.

It is found in the plastid. The protein localises to the chloroplast. Essential for embryo development. This is Pentatricopeptide repeat-containing protein At4g39620, chloroplastic from Arabidopsis thaliana (Mouse-ear cress).